A 428-amino-acid chain; its full sequence is Gamma-glutamyl phosphate reductase (428 aa).

Belongs to the gamma-glutamyl phosphate reductase family.

The protein resides in the cytoplasm. It catalyses the reaction L-glutamate 5-semialdehyde + phosphate + NADP(+) = L-glutamyl 5-phosphate + NADPH + H(+). It participates in amino-acid biosynthesis; L-proline biosynthesis; L-glutamate 5-semialdehyde from L-glutamate: step 2/2. In terms of biological role, catalyzes the NADPH-dependent reduction of L-glutamate 5-phosphate into L-glutamate 5-semialdehyde and phosphate. The product spontaneously undergoes cyclization to form 1-pyrroline-5-carboxylate. This is Gamma-glutamyl phosphate reductase from Streptomyces coelicolor (strain ATCC BAA-471 / A3(2) / M145).